The following is a 304-amino-acid chain: Mitochondrial RNA-splicing protein MRS4 (304 aa).

3 Solcar repeats span residues 21 to 108, 118 to 200, and 207 to 300; these read APLH…CKAR, HQPM…ASKF, and YNPL…AKHF. The next 6 helical transmembrane spans lie at 23-41, 83-102, 120-139, 175-194, 209-228, and 275-288; these read LHSQ…HSLM, GVQS…FGTY, PMKT…ALMN, SYPT…FMIY, PLIH…ALTT, and GLKP…PATA.

It belongs to the mitochondrial carrier (TC 2.A.29) family.

The protein resides in the mitochondrion inner membrane. MRS4 suppresses a mitochondrial splice defect in the first intron of the COB gene. It may act as a carrier, exerting its suppressor activity via modulation of solute concentrations in the mitochondrion (possibly of cations). Not essential. In Saccharomyces cerevisiae (strain ATCC 204508 / S288c) (Baker's yeast), this protein is Mitochondrial RNA-splicing protein MRS4 (MRS4).